The sequence spans 954 residues: Glycine dehydrogenase (decarboxylating) (954 aa).

An N6-(pyridoxal phosphate)lysine modification is found at Lys704.

Belongs to the GcvP family. In terms of assembly, the glycine cleavage system is composed of four proteins: P, T, L and H. Pyridoxal 5'-phosphate serves as cofactor.

The enzyme catalyses N(6)-[(R)-lipoyl]-L-lysyl-[glycine-cleavage complex H protein] + glycine + H(+) = N(6)-[(R)-S(8)-aminomethyldihydrolipoyl]-L-lysyl-[glycine-cleavage complex H protein] + CO2. In terms of biological role, the glycine cleavage system catalyzes the degradation of glycine. The P protein binds the alpha-amino group of glycine through its pyridoxal phosphate cofactor; CO(2) is released and the remaining methylamine moiety is then transferred to the lipoamide cofactor of the H protein. This chain is Glycine dehydrogenase (decarboxylating), found in Rhizobium meliloti (strain 1021) (Ensifer meliloti).